Consider the following 215-residue polypeptide: Protein C' (215 aa).

Residues 12-34 (MPSFLKKILKLRGRRQEDESRSR) form a disordered region. Residues 15–22 (FLKKILKL) are involved in self-degradation and in host STAT1 degradation. A compositionally biased stretch (basic and acidic residues) spans 25–35 (RRQEDESRSRM). The segment covering 36–66 (LSDSSTQSYQVNQLTSEGTEAGSTIPSTPSK) has biased composition (polar residues).

It belongs to the respirovirus protein C family. As to quaternary structure, the different isoforms interact (via C-terminus) with unphosphorylated and phosphorylated human STAT1 (via N-terminus), favoring the formation of parallel STAT1 homodimers. The different isoforms do not interact with host STAT2. C protein interacts with L protein; this interaction has an inhibitory effect on viral transcription and replication. In terms of processing, protein Y1 is produced not only by alternative initiation, but also by proteolytic cleavage of C'. Only alternative initiation is detected in vitro, whereas in vivo cleavage seems to be predominant.

Its subcellular location is the host cytoplasm. In terms of biological role, the different products prevent the establishment of cellular antiviral state by blocking the interferon-alpha/beta (IFN-alpha/beta) and IFN-gamma signaling pathways. They inhibit IFN-alpha/beta induced tyrosine phosphorylation of STAT1 and STAT2. Blocking the IFN-alpha/beta pathway requires binding to STAT1 in the cytoplasm. They inhibit IFN-gamma induced serine phosphorylation of STAT1. Block the IFN-gamma pathway by binding to and stabilizing the parallel form of the STAT1 dimer, further inducing high-molecular-weight complex formation and inhibition of transcription by IFN-gamma. May also have a role in preventing the cell to enter apoptosis. Modulate regulation of viral transcription and replication. Overexpression inhibits the viral RNA polymerase. The absence of all C', C and Y1 proteins leads to viral delayed growth. Plays an important role in virion particles release. Modulates virion shape. This chain is Protein C' (P/V/C), found in Sendai virus (strain Ohita) (SeV).